Consider the following 129-residue polypeptide: Holo-[acyl-carrier-protein] synthase (129 aa).

Mg(2+) is bound by residues D8 and E58.

Belongs to the P-Pant transferase superfamily. AcpS family. The cofactor is Mg(2+).

The protein localises to the cytoplasm. The enzyme catalyses apo-[ACP] + CoA = holo-[ACP] + adenosine 3',5'-bisphosphate + H(+). Functionally, transfers the 4'-phosphopantetheine moiety from coenzyme A to a Ser of acyl-carrier-protein. This chain is Holo-[acyl-carrier-protein] synthase, found in Geobacillus kaustophilus (strain HTA426).